We begin with the raw amino-acid sequence, 91 residues long: Small ribosomal subunit protein uS19 (91 aa).

Belongs to the universal ribosomal protein uS19 family.

In terms of biological role, protein S19 forms a complex with S13 that binds strongly to the 16S ribosomal RNA. In Parasynechococcus marenigrum (strain WH8102), this protein is Small ribosomal subunit protein uS19.